Here is a 131-residue protein sequence, read N- to C-terminus: Fluoride-specific ion channel FluC 1 (131 aa).

Transmembrane regions (helical) follow at residues 4–24, 40–60, 73–93, and 108–128; these read LALP…GAWL, HWGT…VLAL, LILL…TFAV, and LVLA…GVGL. Residues Gly-83 and Ser-86 each contribute to the Na(+) site.

Belongs to the fluoride channel Fluc/FEX (TC 1.A.43) family.

Its subcellular location is the cell inner membrane. It catalyses the reaction fluoride(in) = fluoride(out). With respect to regulation, na(+) is not transported, but it plays an essential structural role and its presence is essential for fluoride channel function. In terms of biological role, fluoride-specific ion channel. Important for reducing fluoride concentration in the cell, thus reducing its toxicity. The chain is Fluoride-specific ion channel FluC 1 from Prochlorococcus marinus (strain MIT 9313).